The primary structure comprises 683 residues: uncharacterized protein (683 aa).

Composition is skewed to polar residues over residues Phe-407–Pro-420 and Glu-512–Ala-529. Disordered regions lie at residues Phe-407–Thr-427, Phe-509–Val-556, and His-621–Asp-648. Over residues Leu-531–Thr-542 the composition is skewed to low complexity. Composition is skewed to polar residues over residues Asn-543–Val-556 and His-621–His-630. Residues Val-633–Asp-648 are compositionally biased toward basic and acidic residues. A helical membrane pass occupies residues Ile-657–Ile-677.

The protein resides in the host membrane. This is an uncharacterized protein from Alcelaphine herpesvirus 1 (strain C500) (AlHV-1).